Consider the following 246-residue polypeptide: Endonuclease V (246 aa).

Residues aspartate 50 and aspartate 120 each coordinate Mg(2+).

It belongs to the endonuclease V family. Mg(2+) serves as cofactor.

Its subcellular location is the cytoplasm. The catalysed reaction is Endonucleolytic cleavage at apurinic or apyrimidinic sites to products with a 5'-phosphate.. DNA repair enzyme involved in the repair of deaminated bases. Selectively cleaves double-stranded DNA at the second phosphodiester bond 3' to a deoxyinosine leaving behind the intact lesion on the nicked DNA. This chain is Endonuclease V, found in Gloeobacter violaceus (strain ATCC 29082 / PCC 7421).